A 196-amino-acid polypeptide reads, in one-letter code: ATP-dependent Clp protease proteolytic subunit (196 aa).

Catalysis depends on Ser98, which acts as the Nucleophile. The active site involves His123.

The protein belongs to the peptidase S14 family. As to quaternary structure, fourteen ClpP subunits assemble into 2 heptameric rings which stack back to back to give a disk-like structure with a central cavity, resembling the structure of eukaryotic proteasomes.

The protein localises to the cytoplasm. The enzyme catalyses Hydrolysis of proteins to small peptides in the presence of ATP and magnesium. alpha-casein is the usual test substrate. In the absence of ATP, only oligopeptides shorter than five residues are hydrolyzed (such as succinyl-Leu-Tyr-|-NHMec, and Leu-Tyr-Leu-|-Tyr-Trp, in which cleavage of the -Tyr-|-Leu- and -Tyr-|-Trp bonds also occurs).. Its function is as follows. Cleaves peptides in various proteins in a process that requires ATP hydrolysis. Has a chymotrypsin-like activity. Plays a major role in the degradation of misfolded proteins. The sequence is that of ATP-dependent Clp protease proteolytic subunit from Acidobacterium capsulatum (strain ATCC 51196 / DSM 11244 / BCRC 80197 / JCM 7670 / NBRC 15755 / NCIMB 13165 / 161).